We begin with the raw amino-acid sequence, 76 residues long: Acyl carrier protein (76 aa).

The Carrier domain occupies 1–75 (MVFEKIKALI…DIVFYITKNT (75 aa)). An O-(pantetheine 4'-phosphoryl)serine modification is found at serine 35.

It belongs to the acyl carrier protein (ACP) family. 4'-phosphopantetheine is transferred from CoA to a specific serine of apo-ACP by AcpS. This modification is essential for activity because fatty acids are bound in thioester linkage to the sulfhydryl of the prosthetic group.

Its subcellular location is the cytoplasm. It participates in lipid metabolism; fatty acid biosynthesis. In terms of biological role, carrier of the growing fatty acid chain in fatty acid biosynthesis. In Onion yellows phytoplasma (strain OY-M), this protein is Acyl carrier protein.